Reading from the N-terminus, the 342-residue chain is D-erythrose-4-phosphate dehydrogenase (342 aa).

11–12 (RV) is a binding site for NAD(+). Substrate-binding positions include 153–155 (SCT), Arg-199, 212–213 (TK), and Arg-235. Cys-154 acts as the Nucleophile in catalysis. Residue Asn-317 participates in NAD(+) binding.

The protein belongs to the glyceraldehyde-3-phosphate dehydrogenase family. Epd subfamily. In terms of assembly, homotetramer.

It localises to the cytoplasm. It catalyses the reaction D-erythrose 4-phosphate + NAD(+) + H2O = 4-phospho-D-erythronate + NADH + 2 H(+). It functions in the pathway cofactor biosynthesis; pyridoxine 5'-phosphate biosynthesis; pyridoxine 5'-phosphate from D-erythrose 4-phosphate: step 1/5. Its function is as follows. Catalyzes the NAD-dependent conversion of D-erythrose 4-phosphate to 4-phosphoerythronate. In Pseudoalteromonas atlantica (strain T6c / ATCC BAA-1087), this protein is D-erythrose-4-phosphate dehydrogenase.